The primary structure comprises 346 residues: Uroporphyrinogen decarboxylase (346 aa).

Residues 26 to 30 (RQAGR), D76, Y153, S208, and H323 each bind substrate.

It belongs to the uroporphyrinogen decarboxylase family. Homodimer.

Its subcellular location is the cytoplasm. The enzyme catalyses uroporphyrinogen III + 4 H(+) = coproporphyrinogen III + 4 CO2. It participates in porphyrin-containing compound metabolism; protoporphyrin-IX biosynthesis; coproporphyrinogen-III from 5-aminolevulinate: step 4/4. Functionally, catalyzes the decarboxylation of four acetate groups of uroporphyrinogen-III to yield coproporphyrinogen-III. The sequence is that of Uroporphyrinogen decarboxylase from Prochlorococcus marinus (strain AS9601).